The chain runs to 327 residues: MTVDSNTSSGRGNDPEQIDLIELLLQLWRGKMTIIVAVIIAILLAVGYLMIAKEKWTSTAIITQPDAAQVATYTNALNVLYGGNAPKISEVQANFISRFSSAFSALSEVLDNQKEREKLTIEQSVKGQALPLSVSYVSTTAEGAQRRLAEYIQQVDEEVAKELEVDLKDNITLQTKTLQESLETQEVVAQEQKDLRIKQIEEALRYADEAKITQPQIQQTQDVTQDTMFLLGSDALKSMIQNEATRPLVFSPAYYQTKQTLLDIKNLKVTADTVHVYRYVMKPTLPVRRDSPKTAITLVLAVLLGGMIGAGIVLGRNALRSYKPKAL.

At 1–31 (MTVDSNTSSGRGNDPEQIDLIELLLQLWRGK) the chain is on the cytoplasmic side. Residues 32–52 (MTIIVAVIIAILLAVGYLMIA) form a helical membrane-spanning segment. The Periplasmic segment spans residues 53-294 (KEKWTSTAII…LPVRRDSPKT (242 aa)). Residues 295–315 (AITLVLAVLLGGMIGAGIVLG) form a helical membrane-spanning segment. The Cytoplasmic segment spans residues 316 to 327 (RNALRSYKPKAL).

The protein belongs to the WzzB/Cld/Rol family.

The protein localises to the cell inner membrane. It participates in bacterial outer membrane biogenesis; lipopolysaccharide biosynthesis. Its function is as follows. Confers a modal distribution of chain length on the O-antigen component of lipopolysaccharide (LPS). Gives rise to a reduced number of short chain molecules and increases in numbers of longer molecules, with a modal value of 20. This is Chain length determinant protein (wzzB) from Salmonella typhimurium (strain LT2 / SGSC1412 / ATCC 700720).